We begin with the raw amino-acid sequence, 386 residues long: MQMADLEKKLENSVLPPLLRRELSEKILKENINEEYIVDEIIQETIRAYSRTVIEPGEAVGVIAAQSIGEPGTQMTMRTFHYAGVAELNVTLGLPRMIEIVDARKEPSTPTMSIYLRGDYKYDRESAAIVSKNIESTTVESVSEDISVDLVNECITIVLDVQQLESRQLTVNNVVEAIKSKMKLKIEENENILSLKIKTPSLKALRKRLPKVREIHLKGVPNIKRVIIRKEIDEYVLYSEGSNLKEVFEIDGVDTTKTTTNNIVEIQDVLGVEAARNAIIREMDATLGNQGLTVDKRHLMMVADLMTTDGVVKPIGRHGIGGEKASVLARAAFEETVKHLYSASMRGYVDDLSGVVENIIVGKPISMGTGCINVCIKKEYEEGKEL.

The protein belongs to the RNA polymerase beta' chain family. Part of the RNA polymerase complex.

It localises to the cytoplasm. The enzyme catalyses RNA(n) + a ribonucleoside 5'-triphosphate = RNA(n+1) + diphosphate. Functionally, DNA-dependent RNA polymerase (RNAP) catalyzes the transcription of DNA into RNA using the four ribonucleoside triphosphates as substrates. Forms part of the jaw domain. The protein is DNA-directed RNA polymerase subunit Rpo1C of Methanococcus vannielii (strain ATCC 35089 / DSM 1224 / JCM 13029 / OCM 148 / SB).